The chain runs to 481 residues: UDP-N-acetylmuramate--L-alanine ligase (481 aa).

123 to 129 (GTHGKTT) serves as a coordination point for ATP.

It belongs to the MurCDEF family.

It is found in the cytoplasm. The enzyme catalyses UDP-N-acetyl-alpha-D-muramate + L-alanine + ATP = UDP-N-acetyl-alpha-D-muramoyl-L-alanine + ADP + phosphate + H(+). It participates in cell wall biogenesis; peptidoglycan biosynthesis. Functionally, cell wall formation. The sequence is that of UDP-N-acetylmuramate--L-alanine ligase from Pseudomonas fluorescens (strain SBW25).